Reading from the N-terminus, the 207-residue chain is Octanoyltransferase (207 aa).

Positions 27-203 (ASTEDELWVV…HLETQFTPKA (177 aa)) constitute a BPL/LPL catalytic domain. Residues 66-73 (RGGQITYH), 133-135 (SLG), and 146-148 (GLA) each bind substrate. The active-site Acyl-thioester intermediate is Cys164.

Belongs to the LipB family.

It is found in the cytoplasm. It catalyses the reaction octanoyl-[ACP] + L-lysyl-[protein] = N(6)-octanoyl-L-lysyl-[protein] + holo-[ACP] + H(+). Its pathway is protein modification; protein lipoylation via endogenous pathway; protein N(6)-(lipoyl)lysine from octanoyl-[acyl-carrier-protein]: step 1/2. Its function is as follows. Catalyzes the transfer of endogenously produced octanoic acid from octanoyl-acyl-carrier-protein onto the lipoyl domains of lipoate-dependent enzymes. Lipoyl-ACP can also act as a substrate although octanoyl-ACP is likely to be the physiological substrate. This chain is Octanoyltransferase, found in Neisseria meningitidis serogroup C / serotype 2a (strain ATCC 700532 / DSM 15464 / FAM18).